The primary structure comprises 313 residues: Aspartate carbamoyltransferase catalytic subunit (313 aa).

Carbamoyl phosphate contacts are provided by arginine 51 and threonine 52. Residue lysine 80 coordinates L-aspartate. Arginine 101, histidine 129, and glutamine 132 together coordinate carbamoyl phosphate. L-aspartate is bound by residues arginine 162 and arginine 224. 2 residues coordinate carbamoyl phosphate: leucine 263 and proline 264.

This sequence belongs to the aspartate/ornithine carbamoyltransferase superfamily. ATCase family. Heterododecamer (2C3:3R2) of six catalytic PyrB chains organized as two trimers (C3), and six regulatory PyrI chains organized as three dimers (R2).

It catalyses the reaction carbamoyl phosphate + L-aspartate = N-carbamoyl-L-aspartate + phosphate + H(+). It functions in the pathway pyrimidine metabolism; UMP biosynthesis via de novo pathway; (S)-dihydroorotate from bicarbonate: step 2/3. Functionally, catalyzes the condensation of carbamoyl phosphate and aspartate to form carbamoyl aspartate and inorganic phosphate, the committed step in the de novo pyrimidine nucleotide biosynthesis pathway. This Phocaeicola vulgatus (strain ATCC 8482 / DSM 1447 / JCM 5826 / CCUG 4940 / NBRC 14291 / NCTC 11154) (Bacteroides vulgatus) protein is Aspartate carbamoyltransferase catalytic subunit.